The sequence spans 78 residues: Defensin beta 136 (78 aa).

Residues 1-21 form the signal peptide; that stretch reads MNLCLSALLFFLVILLPSGKG. Disulfide bonds link cysteine 33/cysteine 60, cysteine 40/cysteine 54, and cysteine 44/cysteine 61.

This sequence belongs to the beta-defensin family.

It is found in the secreted. Functionally, host defense peptide that exhibits antibacterial and antifungal activity. Exhibits antimicrobial activity against E.coli, S.aureus and C.albicans (in vitro). Has high lipopolysaccharide (LPS)-binding affinity, and may thereby be involved in immunoregulation through LPS neutralization. The polypeptide is Defensin beta 136 (DEFB136) (Homo sapiens (Human)).